The following is a 129-amino-acid chain: MDHDPHSLGRQGELLAAEYLAGKGYRIIVRNYRHRRNEIDIIAFDGRTLCFIEVKTRGSLEKGHPVESVTPQKQKEIIKAARSYLLTLENREPDCRFDVIAILADAMDNDRIRSFTIEHFIDAFWEETG.

The protein belongs to the UPF0102 family.

This chain is UPF0102 protein Clim_0016, found in Chlorobium limicola (strain DSM 245 / NBRC 103803 / 6330).